The following is a 743-amino-acid chain: Type VI secretion system spike protein VgrG1 (743 aa).

This sequence belongs to the VgrG protein family.

Its subcellular location is the secreted. The catalysed reaction is L-arginyl-[protein] + NAD(+) = N(omega)-(ADP-D-ribosyl)-L-arginyl-[protein] + nicotinamide + H(+). Part of the type VI secretion system specialized secretion system, which delivers several virulence factors in both prokaryotic and eukaryotic cells during infection. Acts directly as an secreted effector with an actin ADP-ribosyltransferase activity that disrupts the host actin cytoskeleton, leading to a decrease in host cell viability and an increase in apoptosis. The sequence is that of Type VI secretion system spike protein VgrG1 (vgrG1) from Aeromonas hydrophila subsp. hydrophila (strain ATCC 7966 / DSM 30187 / BCRC 13018 / CCUG 14551 / JCM 1027 / KCTC 2358 / NCIMB 9240 / NCTC 8049).